The following is a 491-amino-acid chain: Pentatricopeptide repeat-containing protein At5g27460 (491 aa).

PPR repeat units follow at residues 69-99, 105-139, 142-176, 177-211, 212-246, 248-278, 283-313, 318-348, 353-387, and 388-426; these read SLSE…MENQ, SVYD…SVSM, AKSA…GFLV, TPHP…KIPR, NVLS…KSVE, GWSS…AEKM, NRLG…SKSV, SCVN…WEAQ, DVRV…GGTP, and NYKT…HWRP.

The protein belongs to the PPR family. P subfamily.

In Arabidopsis thaliana (Mouse-ear cress), this protein is Pentatricopeptide repeat-containing protein At5g27460.